A 623-amino-acid chain; its full sequence is mRNA-capping enzyme (623 aa).

A TPase region spans residues 13 to 224; it reads MGLPDRWLHC…IDNGRPSTSQ (212 aa). A Tyrosine-protein phosphatase domain is found at 44-196; it reads YDNQIAERRY…YDPTEDDKIL (153 aa). Residue cysteine 136 is the Phosphocysteine intermediate of the active site. Polar residues predominate over residues 213–229; it reads TQIDNGRPSTSQQIPAT. A disordered region spans residues 213–243; it reads TQIDNGRPSTSQQIPATNGNNNQNGNQLSGG. Low complexity predominate over residues 230-239; it reads NGNNNQNGNQ. A GTase region spans residues 241 to 585; it reads SGGGDNSKLF…NPVTETYLIE (345 aa). Catalysis depends on lysine 311, which acts as the N6-GMP-lysine intermediate. GTP-binding positions include arginine 316, arginine 331, 357–359, 477–479, and 553–558; these read DTE, KWK, and RERTDK. Residues 603–623 form a disordered region; the sequence is HHQIHQQQLHEGEPEARRQKL. The span at 610 to 623 shows a compositional bias: basic and acidic residues; it reads QLHEGEPEARRQKL.

It in the N-terminal section; belongs to the non-receptor class of the protein-tyrosine phosphatase family. This sequence in the C-terminal section; belongs to the eukaryotic GTase family.

Its subcellular location is the nucleus. The enzyme catalyses a 5'-end triphospho-ribonucleoside in mRNA + H2O = a 5'-end diphospho-ribonucleoside in mRNA + phosphate + H(+). It carries out the reaction a 5'-end diphospho-ribonucleoside in mRNA + GTP + H(+) = a 5'-end (5'-triphosphoguanosine)-ribonucleoside in mRNA + diphosphate. With respect to regulation, RNA triphosphatase activity is inhibited by magnesium. Its function is as follows. Bifunctional mRNA-capping enzyme exhibiting RNA 5'-triphosphate monophosphatase activity in the N-terminal part and mRNA guanylyltransferase activity in the C-terminal part. Catalyzes the first two steps of cap formation: by removing the gamma-phosphate from the 5'-triphosphate end of nascent mRNA to yield a diphosphate end, and by transferring the GMP moiety of GTP to the 5'-diphosphate terminus via a covalent enzyme-GMP reaction intermediate. The polypeptide is mRNA-capping enzyme (cel-1) (Caenorhabditis elegans).